We begin with the raw amino-acid sequence, 355 residues long: MGCTVSAEDKAAAERSKMIDKNLREDGEKAAREVKLLLLGAGESGKSTIVKQMKIIHEDGYSEEECRQYRAVVYSNTIQSIMAIVKAMGNLQIDFADPQRADDARQLFALSCAAEEQGMLPEDLSGVIRRLWADHGVQACFGRSREYQLNDSAAYYLNDLERIAQSDYIPTQQDVLRTRVKTTGIVETHFTFKDLHFKMFDVGGQRSERKKWIHCFEGVTAIIFCVALSAYDLVLAEDEEMNRMHESMKLFDSICNNKWFTDTSIILFLNKKDLFEEKITQSPLTICFPEYTGANKYDEAASYIQSKFEDLNKRKDTKEIYTHFTCATDTKNVQFVFDAVTDVIIKNNLKDCGLF.

G2 carries N-myristoyl glycine lipidation. C3 carries the S-palmitoyl cysteine lipid modification. In terms of domain architecture, G-alpha spans 32–355; it reads REVKLLLLGA…KNNLKDCGLF (324 aa). Residues 35-48 form a G1 motif region; sequence KLLLLGAGESGKST. GTP-binding positions include 40 to 47, 176 to 182, 201 to 205, 270 to 273, and A327; these read GAGESGKS, LRTRVKT, DVGGQ, and NKKD. Mg(2+)-binding residues include S47 and T182. A G2 motif region spans residues 174–182; the sequence is DVLRTRVKT. The tract at residues 197-206 is G3 motif; the sequence is FKMFDVGGQR. Residues 266–273 form a G4 motif region; the sequence is ILFLNKKD. The segment at 325-330 is G5 motif; it reads TCATDT.

This sequence belongs to the G-alpha family. G(i/o/t/z) subfamily. In terms of assembly, g proteins are composed of 3 units; alpha, beta and gamma. The alpha chain contains the guanine nucleotide binding site. In this context, interacts with GNB2. Interacts with UNC5B. Interacts with GPSM1. Interacts with RGS12 and RGS14. Interacts (inactive GDP-bound form) with NUCB1 (via GBA motif); the interaction leads to activation of GNAI3. Interacts (inactive GDP-bound form) with CCDC88C/DAPLE (via GBA motif). Interacts (inactive GDP-bound form) with CCDC8A/GIV (via GBA motif).

The protein resides in the cytoplasm. Its subcellular location is the cell membrane. The protein localises to the cytoskeleton. It is found in the microtubule organizing center. It localises to the centrosome. The protein resides in the membrane. Functionally, guanine nucleotide-binding proteins (G proteins) are involved as modulators or transducers in various transmembrane signaling systems. The G(i) proteins are involved in hormonal regulation of adenylate cyclase: they inhibit the cyclase in response to beta-adrenergic stimuli. May play a role in cell division. This Rattus norvegicus (Rat) protein is Guanine nucleotide-binding protein G(i) subunit alpha-2 (Gnai2).